We begin with the raw amino-acid sequence, 1382 residues long: Insulin receptor (1382 aa).

Residues 1–27 (MATGGRRGAAAAPLLVAVAALLLGAAG) form the signal peptide. Extracellular segments lie at residues 28–758 (HLYP…PRPS) and 763–956 (SLGD…NIAK). Cys-35 and Cys-53 form a disulfide bridge. N-linked (GlcNAc...) asparagine glycans are attached at residues Asn-43, Asn-52, Asn-105, and Asn-138. Cystine bridges form between Cys-153/Cys-182, Cys-186/Cys-209, Cys-196/Cys-215, Cys-219/Cys-228, Cys-223/Cys-234, Cys-235/Cys-243, Cys-239/Cys-252, Cys-255/Cys-264, and Cys-268/Cys-280. An N-linked (GlcNAc...) asparagine glycan is attached at Asn-242. Asn-282 carries N-linked (GlcNAc...) asparagine glycosylation. Intrachain disulfides connect Cys-286–Cys-311, Cys-293–Cys-301, Cys-315–Cys-328, Cys-331–Cys-335, and Cys-339–Cys-360. Asn-322 is a glycosylation site (N-linked (GlcNAc...) asparagine). Asn-364 carries N-linked (GlcNAc...) asparagine glycosylation. Ser-400 bears the Phosphoserine mark. Tyr-401 bears the Phosphotyrosine mark. Phosphoserine is present on Ser-407. N-linked (GlcNAc...) asparagine glycans are attached at residues Asn-424 and Asn-445. The cysteines at positions 462 and 495 are disulfide-linked. Asn-541, Asn-633, Asn-651, and Asn-698 each carry an N-linked (GlcNAc...) asparagine glycan. Positions 624 to 726 (VPLDPISVSN…SQILKELEES (103 aa)) constitute a Fibronectin type-III 1 domain. 2 disulfide bridges follow: Cys-674/Cys-899 and Cys-825/Cys-834. Residues 686 to 708 (SPPFESEDSQKHNQSEYEDSAGE) form a disordered region. Positions 733–741 (EDYLHNVVF) are insulin-binding. The interval 746–766 (TSSGTGAEDPRPSRKRRSLGD) is disordered. Fibronectin type-III domains lie at 757–842 (PSRK…YVSA) and 853–947 (IVGP…VTDY). N-linked (GlcNAc...) asparagine glycosylation is found at Asn-769 and Asn-782. Asn-920 and Asn-933 each carry an N-linked (GlcNAc...) asparagine glycan. The helical transmembrane segment at 957 to 979 (IIIGPLIFVFLFSVVIGSIYLFL) threads the bilayer. Topologically, residues 980 to 1382 (RKRQPDGPLG…ILTLPRSNPS (403 aa)) are cytoplasmic. Phosphotyrosine; by autocatalysis is present on residues Tyr-992, Tyr-999, and Tyr-1011. Tyr-999 is a region of interest (important for interaction with IRS1, SHC1 and STAT5B). Residues 1023-1298 (ITLLRELGQG…LLKDDLHPSF (276 aa)) form the Protein kinase domain. Residues Ser-1033 and Lys-1057 each contribute to the ATP site. Residue Lys-1079 forms a Glycyl lysine isopeptide (Lys-Gly) (interchain with G-Cter in ubiquitin) linkage. An S-nitrosocysteine modification is found at Cys-1083. Residue 1104–1110 (ELMAHGD) participates in ATP binding. Asp-1159 functions as the Proton donor/acceptor in the catalytic mechanism. Residues 1163–1164 (RN) and Asp-1177 each bind ATP. 5 positions are modified to phosphotyrosine; by autocatalysis: Tyr-1185, Tyr-1189, Tyr-1190, Tyr-1355, and Tyr-1361. Residues 1360 to 1382 (PYTHMNGGKKNGRILTLPRSNPS) form a disordered region. Residues 1361–1364 (YTHM) form a PIK3R1-binding region.

Belongs to the protein kinase superfamily. Tyr protein kinase family. Insulin receptor subfamily. Tetramer of 2 alpha and 2 beta chains linked by disulfide bonds. The alpha chains carry the insulin-binding regions, while the beta chains carry the kinase domain. Forms a hybrid receptor with IGF1R, the hybrid is a tetramer consisting of 1 alpha chain and 1 beta chain of INSR and 1 alpha chain and 1 beta chain of IGF1R. Interacts with SORBS1 but dissociates from it following insulin stimulation. Binds SH2B2. Activated form of INSR interacts (via Tyr-999) with the PTB/PID domains of IRS1 and SHC1. The sequences surrounding the phosphorylated NPXY motif contribute differentially to either IRS1 or SHC1 recognition. Interacts (via tyrosines in the C-terminus) with IRS2 (via PTB domain and 591-786 AA); the 591-786 would be the primary anchor of IRS2 to INSR while the PTB domain would have a stabilizing action on the interaction with INSR. Interacts with the SH2 domains of the 85 kDa regulatory subunit of PI3K (PIK3R1) in vitro, when autophosphorylated on tyrosine residues. Interacts with SOCS7. Interacts (via the phosphorylated Tyr-999), with SOCS3. Interacts (via the phosphorylated Tyr-1185, Tyr-1189, Tyr-1190) with SOCS1. Interacts with CAV2 (tyrosine-phosphorylated form); the interaction is increased with 'Tyr-27'phosphorylation of CAV2. Interacts with ARRB2. Interacts with GRB10; this interaction blocks the association between IRS1/IRS2 and INSR, significantly reduces insulin-stimulated tyrosine phosphorylation of IRS1 and IRS2 and thus decreases insulin signaling. Interacts with GRB7. Interacts with PDPK1. Interacts (via Tyr-1190) with GRB14 (via BPS domain); this interaction protects the tyrosines in the activation loop from dephosphorylation, but promotes dephosphorylation of Tyr-999, this results in decreased interaction with, and phosphorylation of, IRS1. Interacts (via subunit alpha) with ENPP1 (via 485-599 AA); this interaction blocks autophosphorylation. Interacts with PTPRE; this interaction is dependent of Tyr-1185, Tyr-1189 and Tyr-1190 of the INSR. Interacts with STAT5B (via SH2 domain). Interacts with PTPRF. Interacts with ATIC; ATIC together with PRKAA2/AMPK2 and HACD3/PTPLAD1 is proposed to be part of a signaling netwok regulating INSR autophosphorylation and endocytosis. Interacts with the cone snail venom insulin Con-Ins G1. Interacts with the insulin receptor SORL1; this interaction strongly increases its surface exposure, hence strengthens insulin signal reception. Interacts (tyrosine phosphorylated) with CCDC88A/GIV (via SH2-like region); binding requires autophosphorylation of the INSR C-terminal region. Interacts with GNAI3; the interaction is probably mediated by CCDC88A/GIV. Interacts with LMBRD1. Interacts (in response to insulin stimulation) with NCK1; this interaction may recruit PTPN1 to mediate INSR dephosphorylation. Interacts with CD248; this interaction diminishes INSR autophosphorylation. After being transported from the endoplasmic reticulum to the Golgi apparatus, the single glycosylated precursor is further glycosylated and then cleaved, followed by its transport to the plasma membrane. Post-translationally, autophosphorylated on tyrosine residues in response to insulin. Phosphorylation of Tyr-999 is required for binding to IRS1, SHC1 and STAT5B. Dephosphorylated by PTPRE at Tyr-999, Tyr-1185, Tyr-1189 and Tyr-1190. May also be phosphorylated at Tyr-1185 and Tyr-1190 by mTORC2. Dephosphorylated by PTPRF and PTPN1. Dephosphorylated by PTPN2; down-regulates insulin-induced signaling. Dephosphorylation at Tyr-1189 and Tyr-1190 requires the SH2/SH3 adapter protein NCK1, probably to recruit its interaction partner PTPN1. In terms of processing, S-nitrosylation at Cys-1083 by BLVRB inhibits the receptor tyrosine kinase, thereby inhibiting insulin signaling. Ubiquitinated by MARCHF1; leading to degradation thereby reducing surface INSR expression. Isoform Long and isoform Short are predominantly expressed in tissue targets of insulin metabolic effects: liver, adipose tissue and skeletal muscle but are also expressed in the peripheral nerve, kidney, pulmonary alveoli, pancreatic acini, placenta vascular endothelium, fibroblasts, monocytes, granulocytes, erythrocytes and skin. Isoform Short is preferentially expressed in fetal cells such as fetal fibroblasts, muscle, liver and kidney. Found as a hybrid receptor with IGF1R in muscle, heart, kidney, adipose tissue, skeletal muscle, hepatoma, fibroblasts, spleen and placenta (at protein level). Overexpressed in several tumors, including breast, colon, lung, ovary, and thyroid carcinomas.

Its subcellular location is the cell membrane. It localises to the late endosome. The protein localises to the lysosome. It catalyses the reaction L-tyrosyl-[protein] + ATP = O-phospho-L-tyrosyl-[protein] + ADP + H(+). Activated in response to insulin. Autophosphorylation activates the kinase activity. PTPN1, PTPRE and PTPRF dephosphorylate important tyrosine residues, thereby reducing INSR activity. Inhibited by ENPP1. GRB10 and GRB14 inhibit the catalytic activity of the INSR, they block access of substrates to the activated receptor. SOCS1 and SOCS3 act as negative regulators of INSR activity, they bind to the activated INRS and interfere with the phosphorylation of INSR substrates. Its function is as follows. Receptor tyrosine kinase which mediates the pleiotropic actions of insulin. Binding of insulin leads to phosphorylation of several intracellular substrates, including, insulin receptor substrates (IRS1, 2, 3, 4), SHC, GAB1, CBL and other signaling intermediates. Each of these phosphorylated proteins serve as docking proteins for other signaling proteins that contain Src-homology-2 domains (SH2 domain) that specifically recognize different phosphotyrosine residues, including the p85 regulatory subunit of PI3K and SHP2. Phosphorylation of IRSs proteins lead to the activation of two main signaling pathways: the PI3K-AKT/PKB pathway, which is responsible for most of the metabolic actions of insulin, and the Ras-MAPK pathway, which regulates expression of some genes and cooperates with the PI3K pathway to control cell growth and differentiation. Binding of the SH2 domains of PI3K to phosphotyrosines on IRS1 leads to the activation of PI3K and the generation of phosphatidylinositol-(3, 4, 5)-triphosphate (PIP3), a lipid second messenger, which activates several PIP3-dependent serine/threonine kinases, such as PDPK1 and subsequently AKT/PKB. The net effect of this pathway is to produce a translocation of the glucose transporter SLC2A4/GLUT4 from cytoplasmic vesicles to the cell membrane to facilitate glucose transport. Moreover, upon insulin stimulation, activated AKT/PKB is responsible for: anti-apoptotic effect of insulin by inducing phosphorylation of BAD; regulates the expression of gluconeogenic and lipogenic enzymes by controlling the activity of the winged helix or forkhead (FOX) class of transcription factors. Another pathway regulated by PI3K-AKT/PKB activation is mTORC1 signaling pathway which regulates cell growth and metabolism and integrates signals from insulin. AKT mediates insulin-stimulated protein synthesis by phosphorylating TSC2 thereby activating mTORC1 pathway. The Ras/RAF/MAP2K/MAPK pathway is mainly involved in mediating cell growth, survival and cellular differentiation of insulin. Phosphorylated IRS1 recruits GRB2/SOS complex, which triggers the activation of the Ras/RAF/MAP2K/MAPK pathway. In addition to binding insulin, the insulin receptor can bind insulin-like growth factors (IGFI and IGFII). Isoform Short has a higher affinity for IGFII binding. When present in a hybrid receptor with IGF1R, binds IGF1. PubMed:12138094 shows that hybrid receptors composed of IGF1R and INSR isoform Long are activated with a high affinity by IGF1, with low affinity by IGF2 and not significantly activated by insulin, and that hybrid receptors composed of IGF1R and INSR isoform Short are activated by IGF1, IGF2 and insulin. In contrast, PubMed:16831875 shows that hybrid receptors composed of IGF1R and INSR isoform Long and hybrid receptors composed of IGF1R and INSR isoform Short have similar binding characteristics, both bind IGF1 and have a low affinity for insulin. In adipocytes, inhibits lipolysis. The chain is Insulin receptor (INSR) from Homo sapiens (Human).